The chain runs to 102 residues: MDAPKPWHLYLLLCRNGSYYAGITNDLERRFQAHLRGTGARYTRANPPLQVLASHPYPDRATASRAEWLLKQQPRARKLAWLQAQGLLPAESRPDDTPLTPA.

The GIY-YIG domain maps to 5 to 80 (KPWHLYLLLC…KQQPRARKLA (76 aa)).

The protein belongs to the UPF0213 family.

In Xanthomonas campestris pv. campestris (strain ATCC 33913 / DSM 3586 / NCPPB 528 / LMG 568 / P 25), this protein is UPF0213 protein XCC3072.